Consider the following 179-residue polypeptide: Inner membrane-spanning protein YciB (179 aa).

The next 5 helical transmembrane spans lie at 22-42 (IYAATSALIVATAIVLIYSWV), 50-70 (MALITFVLVAVFGGLTLFFHN), 76-96 (WKVTVIYALFAGALLISQWVM), 121-141 (LAWALFFIVCGLANIYIAFWL), and 149-169 (FKVFGLTALTLIFTLLSGVYI).

This sequence belongs to the YciB family.

It is found in the cell inner membrane. Functionally, plays a role in cell envelope biogenesis, maintenance of cell envelope integrity and membrane homeostasis. The chain is Inner membrane-spanning protein YciB from Salmonella dublin (strain CT_02021853).